Reading from the N-terminus, the 83-residue chain is Small ribosomal subunit protein bS16 (83 aa).

The protein belongs to the bacterial ribosomal protein bS16 family.

In Acidovorax ebreus (strain TPSY) (Diaphorobacter sp. (strain TPSY)), this protein is Small ribosomal subunit protein bS16.